The chain runs to 798 residues: Phenylalanine--tRNA ligase beta subunit (798 aa).

Residues 39-148 (FDAIEPIVVG…ESFRIGARLV (110 aa)) enclose the tRNA-binding domain. A B5 domain is found at 402–478 (WQAPVLRFRR…RVRGMDTIEP (77 aa)). Residues Asp-456, Asp-462, Glu-465, and Glu-466 each coordinate Mg(2+). In terms of domain architecture, FDX-ACB spans 708-798 (PVYPPVRRDI…SLVEKLPVRI (91 aa)).

The protein belongs to the phenylalanyl-tRNA synthetase beta subunit family. Type 1 subfamily. Tetramer of two alpha and two beta subunits. The cofactor is Mg(2+).

The protein resides in the cytoplasm. It catalyses the reaction tRNA(Phe) + L-phenylalanine + ATP = L-phenylalanyl-tRNA(Phe) + AMP + diphosphate + H(+). The polypeptide is Phenylalanine--tRNA ligase beta subunit (Nitratidesulfovibrio vulgaris (strain ATCC 29579 / DSM 644 / CCUG 34227 / NCIMB 8303 / VKM B-1760 / Hildenborough) (Desulfovibrio vulgaris)).